The primary structure comprises 300 residues: Cation-efflux pump FieF (300 aa).

A helical transmembrane segment spans residues 24-44 (LLIKIFAWWYTGSVSILAALV). Residues Asp45 and Asp49 each contribute to the Zn(2+) site. Transmembrane regions (helical) follow at residues 82–102 (AALAQSMFISGSALFLFLTGI) and 114–134 (AGVGVVVTLIALVSTLALVTF). Zn(2+) contacts are provided by His153 and Asp157. The next 2 membrane-spanning stretches (helical) occupy residues 156–176 (SDVMMNGAILVALGLSWYGWH) and 178–198 (ADALFALGIGIYILYSALRMG).

Belongs to the cation diffusion facilitator (CDF) transporter (TC 2.A.4) family. FieF subfamily. As to quaternary structure, homodimer.

It is found in the cell inner membrane. It carries out the reaction Zn(2+)(in) + H(+)(out) = Zn(2+)(out) + H(+)(in). It catalyses the reaction Cd(2+)(in) + H(+)(out) = Cd(2+)(out) + H(+)(in). The catalysed reaction is Fe(2+)(in) + H(+)(out) = Fe(2+)(out) + H(+)(in). Functionally, divalent metal cation transporter which exports Zn(2+), Cd(2+) and possibly Fe(2+). May be involved in zinc and iron detoxification by efflux. In Klebsiella pneumoniae subsp. pneumoniae (strain ATCC 700721 / MGH 78578), this protein is Cation-efflux pump FieF.